Here is a 461-residue protein sequence, read N- to C-terminus: ATP synthase subunit beta (461 aa).

An ATP-binding site is contributed by 151 to 158 (GGAGVGKT).

This sequence belongs to the ATPase alpha/beta chains family. As to quaternary structure, F-type ATPases have 2 components, CF(1) - the catalytic core - and CF(0) - the membrane proton channel. CF(1) has five subunits: alpha(3), beta(3), gamma(1), delta(1), epsilon(1). CF(0) has three main subunits: a(1), b(2) and c(9-12). The alpha and beta chains form an alternating ring which encloses part of the gamma chain. CF(1) is attached to CF(0) by a central stalk formed by the gamma and epsilon chains, while a peripheral stalk is formed by the delta and b chains.

The protein resides in the cell inner membrane. The enzyme catalyses ATP + H2O + 4 H(+)(in) = ADP + phosphate + 5 H(+)(out). Its function is as follows. Produces ATP from ADP in the presence of a proton gradient across the membrane. The catalytic sites are hosted primarily by the beta subunits. The polypeptide is ATP synthase subunit beta (Colwellia psychrerythraea (strain 34H / ATCC BAA-681) (Vibrio psychroerythus)).